A 243-amino-acid chain; its full sequence is Bidirectional sugar transporter SWEET2a (243 aa).

A signal peptide spans 1 to 15; that stretch reads MMNALGLSVAATSTG. At 16 to 24 the chain is on the extracellular side; it reads SPFHDVCCY. A helical membrane pass occupies residues 25-45; sequence GAGIAGNIFALVLFISPLPTF. Positions 27-112 constitute a MtN3/slv 1 domain; the sequence is GIAGNIFALV…ATFIAFADAK (86 aa). Over 46–56 the chain is Cytoplasmic; sequence KRIVRNGSTEQ. A helical transmembrane segment spans residues 57–79; it reads FSAMPYIYSLLNCLICLWYGLPF. Residues 80–90 lie on the Extracellular side of the membrane; sequence VSYGVVLVATV. A helical membrane pass occupies residues 91 to 111; sequence NSIGALFQLAYTATFIAFADA. The Cytoplasmic segment spans residues 112–118; it reads KNRVKVS. The chain crosses the membrane as a helical span at residues 119-139; it reads SLLVMVFGVFALIVYVSLALF. Residues 140-146 lie on the Extracellular side of the membrane; it reads DHQTRQL. A helical membrane pass occupies residues 147–167; it reads FVGYLSVASLIFMFASPLSII. The 83-residue stretch at 147–229 folds into the MtN3/slv 2 domain; the sequence is FVGYLSVASL…QLVLYGYFRK (83 aa). Residues 168 to 180 lie on the Cytoplasmic side of the membrane; sequence NLVIRTKSVEYMP. The helical transmembrane segment at 181–201 threads the bilayer; the sequence is FYLSLSMFLMSVSFFAYGVLL. At 202–203 the chain is on the extracellular side; sequence HD. Residues 204-224 traverse the membrane as a helical segment; that stretch reads FFIYIPNGIGTVLGVIQLVLY. Topologically, residues 225-243 are cytoplasmic; the sequence is GYFRKGSREDSLPLLVTHT.

The protein belongs to the SWEET sugar transporter family. As to quaternary structure, forms homooligomers and/or heterooligomers.

Its subcellular location is the cell membrane. Functionally, mediates both low-affinity uptake and efflux of sugar across the plasma membrane. In Oryza sativa subsp. indica (Rice), this protein is Bidirectional sugar transporter SWEET2a (SWEET2A).